Here is a 459-residue protein sequence, read N- to C-terminus: Serine protease HTRA1 (459 aa).

The signal sequence occupies residues Met1 to Leu18. The IGFBP N-terminal domain occupies Ser22–Pro92. Disulfide bonds link Cys26-Cys51, Cys30-Cys53, Cys35-Cys54, Cys42-Cys57, Cys65-Cys80, Cys74-Cys89, Cys91-Cys109, and Cys98-Cys134. Residues Cys74–Gln136 enclose the Kazal-like domain. Residues Gly183 to Met343 are serine protease. Catalysis depends on charge relay system residues His199, Asp229, and Ser307. In terms of domain architecture, PDZ spans Ala344–Glu446.

This sequence belongs to the peptidase S1C family. In terms of assembly, forms homotrimers. In the presence of substrate, may form higher-order multimers in a PDZ-independent manner.

It localises to the cell membrane. Its subcellular location is the secreted. It is found in the cytoplasm. The protein resides in the cytosol. In terms of biological role, serine protease with a variety of targets, including extracellular matrix proteins and proteoglycans such as biglycan, syndecan-4 and glypican-4. Through cleavage of proteoglycans, may release soluble FGF-glycosaminoglycan complexes that promote the range and intensity of FGF signals in the extracellular space. Consequently, facilitates inductive processes in the developing embryo, such as posteriorization, mesoderm induction and neuronal differentiation. Regulates the availability of insulin-like growth factors (IGFs) by cleaving IGF-binding proteins. Inhibits signaling mediated by TGF-beta family members. Consequently, may regulate many physiological processes. Intracellularly, degrades TSC2, leading to the activation of TSC2 downstream targets. In Xenopus laevis (African clawed frog), this protein is Serine protease HTRA1 (htra1).